Here is a 283-residue protein sequence, read N- to C-terminus: 4-hydroxybenzoate octaprenyltransferase (283 aa).

9 helical membrane passes run 16 to 36, 40 to 60, 85 to 105, 108 to 128, 135 to 155, 160 to 180, 204 to 224, 226 to 246, and 263 to 283; these read PIGT…AGAG, LRIV…GCVI, ISAT…FGLV, LNTE…LYPF, LPQI…FTAL, WFIA…YDTE, FDRL…GWIL, LITV…LFAY, and FLHN…HYWF.

This sequence belongs to the UbiA prenyltransferase family. The cofactor is Mg(2+).

It localises to the cell inner membrane. The catalysed reaction is all-trans-octaprenyl diphosphate + 4-hydroxybenzoate = 4-hydroxy-3-(all-trans-octaprenyl)benzoate + diphosphate. It participates in cofactor biosynthesis; ubiquinone biosynthesis. Functionally, catalyzes the prenylation of para-hydroxybenzoate (PHB) with an all-trans polyprenyl group. Mediates the second step in the final reaction sequence of ubiquinone-8 (UQ-8) biosynthesis, which is the condensation of the polyisoprenoid side chain with PHB, generating the first membrane-bound Q intermediate 3-octaprenyl-4-hydroxybenzoate. The chain is 4-hydroxybenzoate octaprenyltransferase from Idiomarina loihiensis (strain ATCC BAA-735 / DSM 15497 / L2-TR).